We begin with the raw amino-acid sequence, 371 residues long: MSSAPHDPFYSSPFGPFYRRHTPYMVQPEYRIYEMNKRLQARSEDSDNLWWDAFATEFFEDDATLTLSFCLEDGPKRYTIGRTLIPRYFSTVFEGGVTDLYYILKHSKESYHNSSITVDCDQCTMVTQHGKPMFTKVCTEGRLILEFTFDDLMRIKTWHFTIRQYRELVPRSILPMHAQDPQVLEQLSKNITRMGLTNFTLNYLRLCVILEPMQELMSRHKTYNLSPRDCLKTCLFQKWQRMVAPPAEPTRQPTTKRRKRKNSTSSTSNSSAGNNANSTNSKKKSAAANLSLSSQDVMVVGEPTLMGGEFGDEDERLITRLENTQYDAANGMDDEEDFNNSPALGNNSPWNSKPPANQETKSENPTPQASQ.

Disordered regions lie at residues 244–289 (APPA…AAAN) and 325–371 (QYDA…QASQ). The segment covering 263 to 289 (STSSTSNSSAGNNANSTNSKKKSAAAN) has biased composition (low complexity). One can recognise an LIM interaction domain (LID) domain in the interval 296–335 (DVMVVGEPTLMGGEFGDEDERLITRLENTQYDAANGMDDE). The span at 339–371 (NNSPALGNNSPWNSKPPANQETKSENPTPQASQ) shows a compositional bias: polar residues.

It belongs to the LDB family. First expressed at stages 15-16 in presumptive limb mesoderm. As limb outgrowth proceeds, expressed in the entire limb bud, concentrating in the distal mesoderm throughout limb development. Both hindlimbs and forelimbs exhibit similar expression patterns.

It localises to the nucleus. Its function is as follows. Binds to the LIM domain of a wide variety of LIM domain-containing transcription factors. In Gallus gallus (Chicken), this protein is LIM domain-binding protein 2 (LDB2).